The sequence spans 135 residues: UPF0355 protein SACOL0457 (135 aa).

Belongs to the UPF0355 family.

This chain is UPF0355 protein SACOL0457, found in Staphylococcus aureus (strain COL).